Consider the following 583-residue polypeptide: Phosphoglucomutase, cytoplasmic (583 aa).

Positions 1–20 (MATFKVSRVETKPYDGQKPG) are disordered. Arg-25 and Ser-124 together coordinate alpha-D-glucose 1,6-bisphosphate. Ser-124 functions as the Phosphoserine intermediate in the catalytic mechanism. Positions 124, 300, 302, and 304 each coordinate Mg(2+). Phosphoserine is present on Ser-124. Asp-304, Arg-305, Thr-368, Glu-387, Ser-389, and Lys-400 together coordinate alpha-D-glucose 1,6-bisphosphate.

The protein belongs to the phosphohexose mutase family. In terms of assembly, monomer. It depends on Mg(2+) as a cofactor.

Its subcellular location is the cytoplasm. The catalysed reaction is alpha-D-glucose 1-phosphate = alpha-D-glucose 6-phosphate. It catalyses the reaction O-phospho-L-seryl-[protein] + alpha-D-glucose 1-phosphate = alpha-D-glucose 1,6-bisphosphate + L-seryl-[protein]. The enzyme catalyses alpha-D-glucose 1,6-bisphosphate + L-seryl-[protein] = O-phospho-L-seryl-[protein] + alpha-D-glucose 6-phosphate. Functionally, catalyzes the reversible isomerization of alpha-D-glucose 1-phosphate to alpha-D-glucose 6-phosphate. The mechanism proceeds via the intermediate compound alpha-D-glucose 1,6-bisphosphate. This enzyme participates in both the breakdown and synthesis of glucose. The chain is Phosphoglucomutase, cytoplasmic (PGM1) from Mesembryanthemum crystallinum (Common ice plant).